We begin with the raw amino-acid sequence, 244 residues long: Adenosylcobinamide-GDP ribazoletransferase (244 aa).

5 helical membrane passes run 31 to 51 (LLFYPVVGLLFGLLLWLASHL), 55 to 75 (APAPLHAALLLALWVLLSGAL), 109 to 129 (IAVVVLVLVLLLKFCALWVLV), 134 to 154 (GGWLVLAPVVGRAAMLGLFMG), and 188 to 208 (VVLGGSPGLWMLLLSLGVFLW).

The protein belongs to the CobS family. Requires Mg(2+) as cofactor.

Its subcellular location is the cell inner membrane. It carries out the reaction alpha-ribazole + adenosylcob(III)inamide-GDP = adenosylcob(III)alamin + GMP + H(+). It catalyses the reaction alpha-ribazole 5'-phosphate + adenosylcob(III)inamide-GDP = adenosylcob(III)alamin 5'-phosphate + GMP + H(+). It participates in cofactor biosynthesis; adenosylcobalamin biosynthesis; adenosylcobalamin from cob(II)yrinate a,c-diamide: step 7/7. Its function is as follows. Joins adenosylcobinamide-GDP and alpha-ribazole to generate adenosylcobalamin (Ado-cobalamin). Also synthesizes adenosylcobalamin 5'-phosphate from adenosylcobinamide-GDP and alpha-ribazole 5'-phosphate. The chain is Adenosylcobinamide-GDP ribazoletransferase from Pseudomonas entomophila (strain L48).